Consider the following 68-residue polypeptide: Protein transport protein Sec61 subunit gamma (68 aa).

Residue Met1 is modified to N-acetylmethionine. At 1-32 (MDQVMQFVEPSRQFVKDSIRLVKRCTKPDRKE) the chain is on the cytoplasmic side. Ser18 carries the phosphoserine modification. Residues 33–61 (FQKIAMATAIGFAIMGFIGFFVKLIHIPI) form a helical membrane-spanning segment. Over 62-68 (NNIIVGG) the chain is Extracellular.

Belongs to the SecE/SEC61-gamma family. In terms of assembly, the SEC61 channel-forming translocon complex consists of channel-forming core components SEC61A1, SEC61B and SEC61G and different auxiliary components such as SEC62 and SEC63. The SEC61 channel associates with the multi-pass translocon (MPT) complex.

It is found in the endoplasmic reticulum membrane. Its function is as follows. Component of SEC61 channel-forming translocon complex that mediates transport of signal peptide-containing precursor polypeptides across the endoplasmic reticulum (ER). Forms a ribosome receptor and a gated pore in the ER membrane, both functions required for cotranslational translocation of nascent polypeptides. The SEC61 channel is also involved in ER membrane insertion of transmembrane proteins: it mediates membrane insertion of the first few transmembrane segments of proteins, while insertion of subsequent transmembrane regions of multi-pass membrane proteins is mediated by the multi-pass translocon (MPT) complex. The SEC61 channel cooperates with the translocating protein TRAM1 to import nascent proteins into the ER. The polypeptide is Protein transport protein Sec61 subunit gamma (SEC61G) (Bos taurus (Bovine)).